Here is a 108-residue protein sequence, read N- to C-terminus: Ig kappa chain V-V region MOPC 149 (108 aa).

The interval 1–23 (DIQMTQSPDYLSASVGETVTITC) is framework-1. A disulfide bridge links C23 with C88. The tract at residues 24–34 (RASENIYSYLA) is complementarity-determining-1. Residues 35–49 (WYQQKQGKSPQLLVY) form a framework-2 region. The tract at residues 50–56 (DAKTLVE) is complementarity-determining-2. The segment at 57 to 88 (GVPSRFSGSGSGTQFSLKINSLQPEDFGSYYC) is framework-3. A complementarity-determining-3 region spans residues 89–97 (QHHYGIPFT). Residues 98-108 (FGSGTKLEIKR) are framework-4.

The protein is Ig kappa chain V-V region MOPC 149 of Mus musculus (Mouse).